The following is a 304-amino-acid chain: Ornithine carbamoyltransferase (304 aa).

Carbamoyl phosphate-binding positions include 53–56 (STRT), Gln-80, Arg-104, and 131–134 (HPCQ). L-ornithine-binding positions include Asn-162, Asp-222, and 226 to 227 (SM). Carbamoyl phosphate-binding positions include 261 to 262 (CL) and Arg-289.

This sequence belongs to the aspartate/ornithine carbamoyltransferase superfamily. OTCase family.

The protein resides in the cytoplasm. The enzyme catalyses carbamoyl phosphate + L-ornithine = L-citrulline + phosphate + H(+). The protein operates within amino-acid biosynthesis; L-arginine biosynthesis; L-arginine from L-ornithine and carbamoyl phosphate: step 1/3. In terms of biological role, reversibly catalyzes the transfer of the carbamoyl group from carbamoyl phosphate (CP) to the N(epsilon) atom of ornithine (ORN) to produce L-citrulline. The protein is Ornithine carbamoyltransferase of Rhizobium johnstonii (strain DSM 114642 / LMG 32736 / 3841) (Rhizobium leguminosarum bv. viciae).